Reading from the N-terminus, the 151-residue chain is Large ribosomal subunit protein uL15 (151 aa).

Residues 1–14 (MRREKKSRAYRGSR) are compositionally biased toward basic residues. Positions 1 to 33 (MRREKKSRAYRGSRTHGWGRVGQHRKSGSRGGR) are disordered.

Belongs to the universal ribosomal protein uL15 family. As to quaternary structure, part of the 50S ribosomal subunit.

In terms of biological role, binds to the 23S rRNA. This Thermofilum pendens (strain DSM 2475 / Hrk 5) protein is Large ribosomal subunit protein uL15.